The following is a 724-amino-acid chain: Hyaluronan mediated motility receptor (724 aa).

Disordered regions lie at residues 1-22 and 40-81; these read MSFPKAPLKRFNDPSGCAPSPG and KSQR…QKND. Phosphoserine is present on Ser20. Basic and acidic residues-rich tracts occupy residues 46–60 and 70–81; these read QQKESKQNLNVDKDT and KSSESKESQKND. 4 N-linked (GlcNAc...) asparagine glycosylation sites follow: Asn133, Asn477, Asn567, and Asn588. The required for interaction with FAM83D stretch occupies residues 365 to 546; that stretch reads EEMVKEKNLF…ITDLQNQLKQ (182 aa). Hyaluronic acid-binding regions lie at residues 635–645 and 657–666; these read KQKIKHVVKLK and KLRCQLAKKK. A Phosphothreonine modification is found at Thr703.

In terms of assembly, interacts with ANKRD26. Interacts with DYNLL1. Interacts with FAM83D/CHICA. In terms of tissue distribution, expressed in testis. Expressed in the breast.

It localises to the cell surface. The protein localises to the cytoplasm. The protein resides in the cytoskeleton. It is found in the spindle. Functionally, receptor for hyaluronic acid (HA). Involved in cell motility. When hyaluronan binds to HMMR, the phosphorylation of a number of proteins, including PTK2/FAK1 occurs. May also be involved in cellular transformation and metastasis formation, and in regulating extracellular-regulated kinase (ERK) activity. May act as a regulator of adipogenisis. This chain is Hyaluronan mediated motility receptor (HMMR), found in Homo sapiens (Human).